A 425-amino-acid chain; its full sequence is Dihydroorotase (425 aa).

Histidine 61 and histidine 63 together coordinate Zn(2+). Residues 63–65 (HLR) and asparagine 95 each bind substrate. 4 residues coordinate Zn(2+): lysine 146, histidine 175, histidine 224, and aspartate 293. Lysine 146 is modified (N6-carboxylysine). The active site involves aspartate 293. Substrate-binding positions include histidine 297 and 311 to 312 (PG).

Belongs to the metallo-dependent hydrolases superfamily. DHOase family. Class I DHOase subfamily. It depends on Zn(2+) as a cofactor.

It carries out the reaction (S)-dihydroorotate + H2O = N-carbamoyl-L-aspartate + H(+). Its pathway is pyrimidine metabolism; UMP biosynthesis via de novo pathway; (S)-dihydroorotate from bicarbonate: step 3/3. Catalyzes the reversible cyclization of carbamoyl aspartate to dihydroorotate. The polypeptide is Dihydroorotase (Aeropyrum pernix (strain ATCC 700893 / DSM 11879 / JCM 9820 / NBRC 100138 / K1)).